The sequence spans 633 residues: 1-deoxy-D-xylulose-5-phosphate synthase (633 aa).

Thiamine diphosphate-binding positions include His-72 and 113–115; that span reads GHS. Asp-144 is a binding site for Mg(2+). Thiamine diphosphate contacts are provided by residues 145–146, Asn-173, Tyr-284, and Glu-367; that span reads GA. Position 173 (Asn-173) interacts with Mg(2+).

The protein belongs to the transketolase family. DXPS subfamily. In terms of assembly, homodimer. Mg(2+) serves as cofactor. It depends on thiamine diphosphate as a cofactor.

The enzyme catalyses D-glyceraldehyde 3-phosphate + pyruvate + H(+) = 1-deoxy-D-xylulose 5-phosphate + CO2. Its pathway is metabolic intermediate biosynthesis; 1-deoxy-D-xylulose 5-phosphate biosynthesis; 1-deoxy-D-xylulose 5-phosphate from D-glyceraldehyde 3-phosphate and pyruvate: step 1/1. Its function is as follows. Catalyzes the acyloin condensation reaction between C atoms 2 and 3 of pyruvate and glyceraldehyde 3-phosphate to yield 1-deoxy-D-xylulose-5-phosphate (DXP). The chain is 1-deoxy-D-xylulose-5-phosphate synthase from Bacillus velezensis (strain DSM 23117 / BGSC 10A6 / LMG 26770 / FZB42) (Bacillus amyloliquefaciens subsp. plantarum).